The chain runs to 219 residues: Charged multivesicular body protein 5 (219 aa).

A compositionally biased stretch (basic residues) spans 1–10 (MNRFFGKAKP). The interval 1 to 21 (MNRFFGKAKPKAPPPSLTDCI) is disordered. Residues 26–179 (SRAESIDKKI…LGDELLADED (154 aa)) are a coiled coil. Ser86 bears the Phosphoserine mark. Residues 188–219 (SAPAIPEGVPTDTKNKDGVLVDEFGLPQIPAS) are disordered.

It belongs to the SNF7 family. As to quaternary structure, probable peripherally associated component of the endosomal sorting required for transport complex III (ESCRT-III). ESCRT-III components are thought to multimerize to form a flat lattice on the perimeter membrane of the endosome. Several assembly forms of ESCRT-III may exist that interact and act sequentially. Interacts with VTA1. Interacts with CHMP2A. Interacts with VTA1; the interaction involves soluble CHMP5. Interacts with NOD2. Interacts with BROX. Post-translationally, ISGylated. Isgylation inhibits its interaction with VTA1.

The protein resides in the cytoplasm. The protein localises to the cytosol. It localises to the endosome membrane. It is found in the midbody. Probable peripherally associated component of the endosomal sorting required for transport complex III (ESCRT-III) which is involved in multivesicular bodies (MVBs) formation and sorting of endosomal cargo proteins into MVBs. MVBs contain intraluminal vesicles (ILVs) that are generated by invagination and scission from the limiting membrane of the endosome and mostly are delivered to lysosomes enabling degradation of membrane proteins, such as stimulated growth factor receptors, lysosomal enzymes and lipids. The MVB pathway appears to require the sequential function of ESCRT-O, -I,-II and -III complexes. ESCRT-III proteins mostly dissociate from the invaginating membrane before the ILV is released. The ESCRT machinery also functions in topologically equivalent membrane fission events, such as the terminal stages of cytokinesis. ESCRT-III proteins are believed to mediate the necessary vesicle extrusion and/or membrane fission activities, possibly in conjunction with the AAA ATPase VPS4. The chain is Charged multivesicular body protein 5 (Chmp5) from Mus musculus (Mouse).